The chain runs to 225 residues: MQIRWFGHSAFMVEVQGLKLLIDPWISNPLSPTSPQEVANMRPTHILITHDHFDHMGDAVDISKAAGAPIVGTYELTLEVAEKGIPEAQTVPMNIGGTIKLGDGVEVYMTPALHTANRGAPSGFVIATPQGTVYHAGDTGLFRDMELIAELYDIDVAMLPIGSVFTMGPREAAIATQFLRPRRVVPMHYNTFPLIRQDPEDFKARVEAVSRAKVYIMKPGDVLKL.

It belongs to the UPF0173 family.

The polypeptide is UPF0173 metal-dependent hydrolase Tneu_1348 (Pyrobaculum neutrophilum (strain DSM 2338 / JCM 9278 / NBRC 100436 / V24Sta) (Thermoproteus neutrophilus)).